A 148-amino-acid chain; its full sequence is MPTRFSKHRKSRGDVCAGYGRVGKHRKHPGGRGNAGGLTHHRINFDKYHPGYFGKLGMRHFHLLRNQYHCPTVSLEKIWTLVPESVRKSLAAKNDGTAPVVDVTQKGFFKVLGHGILPTQPIIVKARYFSKVAEKKIKAVGGACILVA.

The tract at residues 18–38 is disordered; that stretch reads GYGRVGKHRKHPGGRGNAGGL.

It belongs to the universal ribosomal protein uL15 family.

The sequence is that of Large ribosomal subunit protein uL15 (rpl27a) from Dictyostelium discoideum (Social amoeba).